Reading from the N-terminus, the 74-residue chain is Serine protease inhibitor Kazal-type 7 (74 aa).

Residues 1 to 17 (MKLLGGLLLLFTATCLC) form the signal peptide. The 57-residue stretch at 18-74 (NVDCDIYKKYPVVAIPCPIENIPVCGSDYITYGNKCKLCTEILRSNGKIQFLHEGHC) folds into the Kazal-like domain. 3 cysteine pairs are disulfide-bonded: C21–C56, C34–C53, and C42–C74.

Its subcellular location is the secreted. Probable serine protease inhibitor. In Rattus norvegicus (Rat), this protein is Serine protease inhibitor Kazal-type 7 (Spink7).